A 666-amino-acid polypeptide reads, in one-letter code: Endogenous retrovirus group K member 7 Gag polyprotein (666 aa).

G2 carries N-myristoyl glycine lipidation. Disordered stretches follow at residues 165-205 (GKGP…NKTQ) and 217-264 (ELQY…GSEL). Residues 232-247 (GMPPAPQGRAPYPQPP) are compositionally biased toward pro residues. CCHC-type zinc fingers lie at residues 544–561 (GKCYNCGQIGHLKKNCPV) and 580–597 (DLCPRCKKGKHWASQCRS). A disordered region spans residues 598–641 (KFDKNGQPLSGNEQRGQPQAPQQTGAFPIQPFVPQGFQEQQPPL). Positions 604–622 (QPLSGNEQRGQPQAPQQTG) are enriched in polar residues.

It belongs to the beta type-B retroviral Gag protein family. HERV class-II K(HML-2) gag subfamily. Post-translationally, specific enzymatic cleavages may yield mature proteins. In terms of processing, myristoylation is essential for retroviral assembly. Alteration of the glycine residue leads to a block in the budding of particles and an accumulation of Gag inside the cell.

It is found in the cell membrane. The products of the Gag polyproteins of infectious retroviruses perform highly complex orchestrated tasks during the assembly, budding, maturation, and infection stages of the viral replication cycle. During viral assembly, the proteins form membrane associations and self-associations that ultimately result in budding of an immature virion from the infected cell. Gag precursors also function during viral assembly to selectively bind and package two plus strands of genomic RNA. Endogenous Gag proteins may have kept, lost or modified their original function during evolution. This chain is Endogenous retrovirus group K member 7 Gag polyprotein (ERVK-7), found in Homo sapiens (Human).